We begin with the raw amino-acid sequence, 775 residues long: Chloride channel protein CLC-a (775 aa).

A disordered region spans residues 1–28; it reads MDEDGNLQISNSNYNGEEEGEDPENNTL. 12 helical membrane passes run 88-108, 131-151, 178-198, 206-226, 248-268, 278-298, 328-348, 371-391, 453-473, 478-498, 510-530, and 531-551; these read TLACLVGLFTGLIATLINLAV, GLMVFTGANLGLTLVATVLVV, FGFTTMMVKIVGSIGAVAAGL, LVHIGSCIASLLGQGGPDNHR, GSASGVCAAFRSPVGGVLFAL, ALLWRTFFSTAVVVVVLRAFI, AADIIPVTLIGVFGGILGSLY, VLLSLGVSLFTSVCLFGLPFL, MVSLWIFFGLYCILGLITFGI, GLFLPIILMGSAYGRMLGTAM, AVLGAASLMAGSMRMTVSLCV, and IFLELTNNLLLLPITMFVLLI. CBS domains follow at residues 595 to 658 and 703 to 768; these read AKPP…FLNE and TNTT…HLDK. The helical transmembrane segment at 730–750 threads the bilayer; sequence HLLVVPKIQASGMSPVIGILT.

Belongs to the chloride channel (TC 2.A.49) family. Homodimer. Interacts with PP2A5. Broadly expressed in the plant.

It is found in the membrane. Functionally, voltage-gated chloride channel that could play a role in the regulation of nitrate content. The polypeptide is Chloride channel protein CLC-a (CLC-A) (Arabidopsis thaliana (Mouse-ear cress)).